We begin with the raw amino-acid sequence, 253 residues long: Trypsin delta (253 aa).

The signal sequence occupies residues 1 to 22 (MLKFVILLSAVACALGGTIPEG). Residues 23–30 (LLPQLDGR) constitute a propeptide, activation peptide. The Peptidase S1 domain occupies 31–253 (IVGGTATTIS…DLRAWVVRNA (223 aa)). Residues Cys56 and Cys72 are joined by a disulfide bond. Catalysis depends on charge relay system residues His71 and Asp116. Intrachain disulfides connect Cys180–Cys197 and Cys206–Cys230. Catalysis depends on Ser210, which acts as the Charge relay system.

It belongs to the peptidase S1 family.

The protein localises to the secreted. The protein resides in the extracellular space. It carries out the reaction Preferential cleavage: Arg-|-Xaa, Lys-|-Xaa.. In Drosophila erecta (Fruit fly), this protein is Trypsin delta.